The primary structure comprises 69 residues: Putative transmembrane protein ORF34 (69 aa).

Transmembrane regions (helical) follow at residues 7–27 (LLSV…MMQF) and 42–62 (VSLM…IVYF).

The protein resides in the host membrane. This Haloarcula hispanica (His1V) protein is Putative transmembrane protein ORF34.